Reading from the N-terminus, the 152-residue chain is Putative membrane protein insertion efficiency factor (152 aa).

The interval 81 to 152 (AAGGYDPVPG…IVGSGRGPWV (72 aa)) is disordered.

Belongs to the UPF0161 family.

It is found in the cell membrane. Could be involved in insertion of integral membrane proteins into the membrane. The chain is Putative membrane protein insertion efficiency factor from Frankia casuarinae (strain DSM 45818 / CECT 9043 / HFP020203 / CcI3).